Here is a 164-residue protein sequence, read N- to C-terminus: Transcriptional regulator MraZ (164 aa).

SpoVT-AbrB domains are found at residues 7 to 57 and 86 to 129; these read THQN…TVGA and AYPL…NPEA. Residues 133-164 form a disordered region; the sequence is RRQAARSRARTLATSRRPASAPAAGNTAGAAE. The span at 142 to 164 shows a compositional bias: low complexity; the sequence is RTLATSRRPASAPAAGNTAGAAE.

This sequence belongs to the MraZ family. Forms oligomers.

The protein resides in the cytoplasm. It is found in the nucleoid. The protein is Transcriptional regulator MraZ of Gluconobacter oxydans (strain 621H) (Gluconobacter suboxydans).